The following is a 120-amino-acid chain: Large ribosomal subunit protein uL22 (120 aa).

It belongs to the universal ribosomal protein uL22 family. In terms of assembly, part of the 50S ribosomal subunit.

Its function is as follows. This protein binds specifically to 23S rRNA; its binding is stimulated by other ribosomal proteins, e.g. L4, L17, and L20. It is important during the early stages of 50S assembly. It makes multiple contacts with different domains of the 23S rRNA in the assembled 50S subunit and ribosome. The globular domain of the protein is located near the polypeptide exit tunnel on the outside of the subunit, while an extended beta-hairpin is found that lines the wall of the exit tunnel in the center of the 70S ribosome. This chain is Large ribosomal subunit protein uL22, found in Corynebacterium efficiens (strain DSM 44549 / YS-314 / AJ 12310 / JCM 11189 / NBRC 100395).